We begin with the raw amino-acid sequence, 461 residues long: UDP-glycosyltransferase 88B1 (461 aa).

UDP-alpha-D-glucose is bound by residues Ser-278, 340–341 (WA), 358–366 (HCGWNSSLE), and 380–383 (YAEQ).

It belongs to the UDP-glycosyltransferase family.

May glycosylate diterpenes or flavonols in leaves. This chain is UDP-glycosyltransferase 88B1, found in Stevia rebaudiana (Stevia).